The chain runs to 197 residues: DNA helicase/primase complex protein (197 aa).

This sequence belongs to the herpesviridae UL52 family.

In terms of biological role, involved in DNA replication. This is DNA helicase/primase complex protein (7) from Equus caballus (Horse).